A 259-amino-acid polypeptide reads, in one-letter code: UPF0246 protein PSPTO_1244 (259 aa).

It belongs to the UPF0246 family.

The sequence is that of UPF0246 protein PSPTO_1244 from Pseudomonas syringae pv. tomato (strain ATCC BAA-871 / DC3000).